The sequence spans 346 residues: Methylthioribose-1-phosphate isomerase (346 aa).

Substrate is bound by residues 46–48, arginine 89, and glutamine 196; that span reads RGA. Aspartate 237 (proton donor) is an active-site residue. A substrate-binding site is contributed by 247 to 248; sequence NK.

Belongs to the eIF-2B alpha/beta/delta subunits family. MtnA subfamily.

It carries out the reaction 5-(methylsulfanyl)-alpha-D-ribose 1-phosphate = 5-(methylsulfanyl)-D-ribulose 1-phosphate. It participates in amino-acid biosynthesis; L-methionine biosynthesis via salvage pathway; L-methionine from S-methyl-5-thio-alpha-D-ribose 1-phosphate: step 1/6. Functionally, catalyzes the interconversion of methylthioribose-1-phosphate (MTR-1-P) into methylthioribulose-1-phosphate (MTRu-1-P). This is Methylthioribose-1-phosphate isomerase from Geobacter metallireducens (strain ATCC 53774 / DSM 7210 / GS-15).